The sequence spans 127 residues: uncharacterized protein (127 aa).

The segment at 69 to 94 (GDGGSVPEKGKHGILGAQGQEHPGLN) is disordered.

This is an uncharacterized protein from Homo sapiens (Human).